Here is a 541-residue protein sequence, read N- to C-terminus: Chaperonin GroEL (541 aa).

ATP contacts are provided by residues 30–33 (TLGP), Lys-51, 87–91 (DGTTT), Gly-415, 479–481 (NAA), and Asp-495.

The protein belongs to the chaperonin (HSP60) family. In terms of assembly, forms a cylinder of 14 subunits composed of two heptameric rings stacked back-to-back. Interacts with the co-chaperonin GroES.

Its subcellular location is the cytoplasm. It carries out the reaction ATP + H2O + a folded polypeptide = ADP + phosphate + an unfolded polypeptide.. Its function is as follows. Together with its co-chaperonin GroES, plays an essential role in assisting protein folding. The GroEL-GroES system forms a nano-cage that allows encapsulation of the non-native substrate proteins and provides a physical environment optimized to promote and accelerate protein folding. The protein is Chaperonin GroEL of Acinetobacter baumannii (strain SDF).